The chain runs to 291 residues: GTP-binding protein RHO4 (291 aa).

Over residues 14 to 31 (GNESNIVSQGSPSSSNLP) the composition is skewed to polar residues. Residues 14–45 (GNESNIVSQGSPSSSNLPESPGTLDEKNLPRL) form a disordered region. Residue 79–86 (GDGAVGKT) coordinates GTP. Positions 101 to 109 (YIPTIFENY) match the Effector region motif. GTP-binding positions include 127–131 (DTAGQ) and 185–188 (LKSD). Positions 250–273 (THTIKNPFKRNTTRSDIDSSTGDT) are disordered. A phosphoserine mark is found at Ser-264, Ser-268, and Ser-276. A Cysteine methyl ester modification is found at Cys-288. Residue Cys-288 is the site of S-farnesyl cysteine attachment. A propeptide spans 289–291 (IIM) (removed in mature form).

Belongs to the small GTPase superfamily. Rho family. Interacts with BEM4.

Its subcellular location is the cell membrane. It carries out the reaction GTP + H2O = GDP + phosphate + H(+). Plays an important role in cell growth. Required to keep the uninucleated state. May be involved in the organization of the cytoskeleton which affects microtubule functions. Most likely RHO3 and RHO4 of S.cerevisiae regulate partially overlapping but different pathways. The sequence is that of GTP-binding protein RHO4 (RHO4) from Saccharomyces cerevisiae (strain ATCC 204508 / S288c) (Baker's yeast).